Reading from the N-terminus, the 784-residue chain is Ubiquitin carboxyl-terminal hydrolase 1 (784 aa).

Disordered regions lie at residues 1-21 and 34-56; these read MPGVIPSESNGLSRGSPSKKN and KRALDFTDSQENEEKTSEYRGSE. The span at 7-16 shows a compositional bias: polar residues; the sequence is SESNGLSRGS. A phosphoserine mark is found at Ser-16 and Ser-42. The segment covering 45 to 56 has biased composition (basic and acidic residues); that stretch reads NEEKTSEYRGSE. Ser-67 bears the Phosphoserine mark. In terms of domain architecture, USP spans 81 to 784; the sequence is VGLNNLGNTC…TPYLLFYKKL (704 aa). The Nucleophile role is filled by Cys-90. Composition is skewed to basic and acidic residues over residues 233-243 and 252-264; these read VEEQSLQKEET and DSMRNTEDVKEQL. 2 disordered regions span residues 233–342 and 362–414; these read VEEQ…INWL and TTNQ…KSGN. Position 474 is a phosphoserine (Ser-474). The Proton acceptor role is filled by His-592. The disordered stretch occupies residues 684-725; sequence NPDKVVGTPFTDNRNSETNDTTNGTHESDRNKESSDQTGVNM. Over residues 693–708 the composition is skewed to polar residues; the sequence is FTDNRNSETNDTTNGT. A compositionally biased stretch (basic and acidic residues) spans 709-718; sequence HESDRNKESS. Ser-767 is subject to Phosphoserine.

This sequence belongs to the peptidase C19 family. In terms of assembly, interacts with FANCD2 and PCNA. Interacts with WDR48. Interacts with ATAD5; the interaction regulates USP1-mediated PCNA deubiquitination. In terms of processing, autocatalytic cleavage of USP1 following UV irradiation inactivates it, leading to an increase in ubiquitinated PCNA, recruitment of POLH and translesion synthesis. Post-translationally, ubiquitinated by the CRL2(KLHDC2) complex following autocatalytic cleavage, leading to its degradation: the CRL2(KLHDC2) complex recognizes the diglycine (Gly-Gly) at the C-terminus.

The protein resides in the nucleus. The enzyme catalyses Thiol-dependent hydrolysis of ester, thioester, amide, peptide and isopeptide bonds formed by the C-terminal Gly of ubiquitin (a 76-residue protein attached to proteins as an intracellular targeting signal).. Its function is as follows. Negative regulator of DNA damage repair which specifically deubiquitinates monoubiquitinated FANCD2. Also involved in PCNA-mediated translesion synthesis (TLS) by deubiquitinating monoubiquitinated PCNA. Has almost no deubiquitinating activity by itself and requires the interaction with WDR48 to have a high activity. The chain is Ubiquitin carboxyl-terminal hydrolase 1 from Mus musculus (Mouse).